The sequence spans 159 residues: MEKLRRVLSGQDDEEQGLTAQVLDASSLSFNTRLKWFAICFVCGVFFSILGTGLLWLPGGIKLFAVFYTLGNLAALASTCFLMGPVKQLKKMFEATRLLATIVMLLCFIFTLCAALWWHKKGLAVLFCILQFLSMTWYSLSYIPYARDAVIKCCSSLLS.

At 1 to 36 (MEKLRRVLSGQDDEEQGLTAQVLDASSLSFNTRLKW) the chain is on the cytoplasmic side. At Ser9 the chain carries Phosphoserine. A helical transmembrane segment spans residues 37–57 (FAICFVCGVFFSILGTGLLWL). Over 58–62 (PGGIK) the chain is Lumenal. The helical transmembrane segment at 63 to 83 (LFAVFYTLGNLAALASTCFLM) threads the bilayer. At 84–97 (GPVKQLKKMFEATR) the chain is on the cytoplasmic side. A helical transmembrane segment spans residues 98-118 (LLATIVMLLCFIFTLCAALWW). Topologically, residues 119 to 122 (HKKG) are lumenal. The helical transmembrane segment at 123–143 (LAVLFCILQFLSMTWYSLSYI) threads the bilayer. The Cytoplasmic segment spans residues 144–159 (PYARDAVIKCCSSLLS).

This sequence belongs to the SFT2 family.

It is found in the membrane. Functionally, may be involved in fusion of retrograde transport vesicles derived from an endocytic compartment with the Golgi complex. In Homo sapiens (Human), this protein is Vesicle transport protein SFT2A.